Here is a 67-residue protein sequence, read N- to C-terminus: Large ribosomal subunit protein uL29 (67 aa).

Belongs to the universal ribosomal protein uL29 family.

The chain is Large ribosomal subunit protein uL29 (rpmC) from Thermus thermophilus.